Here is a 150-residue protein sequence, read N- to C-terminus: SsrA-binding protein (150 aa).

It belongs to the SmpB family.

The protein resides in the cytoplasm. Its function is as follows. Required for rescue of stalled ribosomes mediated by trans-translation. Binds to transfer-messenger RNA (tmRNA), required for stable association of tmRNA with ribosomes. tmRNA and SmpB together mimic tRNA shape, replacing the anticodon stem-loop with SmpB. tmRNA is encoded by the ssrA gene; the 2 termini fold to resemble tRNA(Ala) and it encodes a 'tag peptide', a short internal open reading frame. During trans-translation Ala-aminoacylated tmRNA acts like a tRNA, entering the A-site of stalled ribosomes, displacing the stalled mRNA. The ribosome then switches to translate the ORF on the tmRNA; the nascent peptide is terminated with the 'tag peptide' encoded by the tmRNA and targeted for degradation. The ribosome is freed to recommence translation, which seems to be the essential function of trans-translation. This chain is SsrA-binding protein, found in Magnetococcus marinus (strain ATCC BAA-1437 / JCM 17883 / MC-1).